Consider the following 171-residue polypeptide: Adenine phosphoribosyltransferase (171 aa).

It belongs to the purine/pyrimidine phosphoribosyltransferase family. In terms of assembly, homodimer.

The protein localises to the cytoplasm. It carries out the reaction AMP + diphosphate = 5-phospho-alpha-D-ribose 1-diphosphate + adenine. Its pathway is purine metabolism; AMP biosynthesis via salvage pathway; AMP from adenine: step 1/1. Functionally, catalyzes a salvage reaction resulting in the formation of AMP, that is energically less costly than de novo synthesis. The polypeptide is Adenine phosphoribosyltransferase (Christiangramia forsetii (strain DSM 17595 / CGMCC 1.15422 / KT0803) (Gramella forsetii)).